The following is a 183-amino-acid chain: U3 small nucleolar ribonucleoprotein protein imp3 (183 aa).

Residues 108–174 (RRLPVVMRNI…IKKHVMDYNN (67 aa)) enclose the S4 RNA-binding domain.

The protein belongs to the universal ribosomal protein uS4 family. In terms of assembly, component of a heterotrimeric complex containing imp3, imp4 and mpp10.

Its subcellular location is the nucleus. The protein localises to the nucleolus. Component of the U3 small nucleolar ribonucleoprotein. Required for the early cleavages at sites A0, A1 and A2 during 18S ribosomal pre-RNA processing. The sequence is that of U3 small nucleolar ribonucleoprotein protein imp3 from Caenorhabditis elegans.